A 359-amino-acid polypeptide reads, in one-letter code: Peptide chain release factor 1 (359 aa).

Gln-234 carries the post-translational modification N5-methylglutamine.

It belongs to the prokaryotic/mitochondrial release factor family. Post-translationally, methylated by PrmC. Methylation increases the termination efficiency of RF1.

It localises to the cytoplasm. In terms of biological role, peptide chain release factor 1 directs the termination of translation in response to the peptide chain termination codons UAG and UAA. The chain is Peptide chain release factor 1 from Clavibacter michiganensis subsp. michiganensis (strain NCPPB 382).